We begin with the raw amino-acid sequence, 86 residues long: Small ribosomal subunit protein bS20 (86 aa).

Over residues 1–11 (MANIKQQKKRN) the composition is skewed to basic residues. The interval 1–20 (MANIKQQKKRNKTNEKRRLQ) is disordered.

The protein belongs to the bacterial ribosomal protein bS20 family.

Functionally, binds directly to 16S ribosomal RNA. This chain is Small ribosomal subunit protein bS20, found in Aster yellows witches'-broom phytoplasma (strain AYWB).